A 315-amino-acid chain; its full sequence is N-acetyl-D-glutamate racemase (315 aa).

3 residues coordinate Mg(2+): D147, E173, and D196.

The protein belongs to the mandelate racemase/muconate lactonizing enzyme family. It depends on Mg(2+) as a cofactor.

The enzyme catalyses N-acetyl-D-glutamate = N-acetyl-L-glutamate. It functions in the pathway amino-acid degradation. Its function is as follows. Racemase involved in a deamination-independent D-glutamate degradation pathway, named the DgcN-DgcA pathway. Catalyzes the conversion of N-acetyl-D-glutamate to N-acetyl-L-glutamate. Also shows racemase activity towards the dipeptide L-Ala-D-Glu, a key constituent of peptidoglycan muropeptides, suggesting that it may also contribute to the degradation of peptidoglycans. In Pseudoalteromonas sp, this protein is N-acetyl-D-glutamate racemase.